Consider the following 64-residue polypeptide: U-scoloptoxin(14)-Er1a (64 aa).

An N-terminal signal peptide occupies residues Met-1–Gly-23.

The protein belongs to the scoloptoxin-14 family. In terms of processing, contains 4 disulfide bonds. In terms of tissue distribution, expressed by the venom gland.

The protein localises to the secreted. This Ethmostigmus rubripes (Giant centipede) protein is U-scoloptoxin(14)-Er1a.